The following is a 206-amino-acid chain: Urease accessory protein UreG (206 aa).

11–18 (GPVGSGKT) lines the GTP pocket.

It belongs to the SIMIBI class G3E GTPase family. UreG subfamily. Homodimer. UreD, UreF and UreG form a complex that acts as a GTP-hydrolysis-dependent molecular chaperone, activating the urease apoprotein by helping to assemble the nickel containing metallocenter of UreC. The UreE protein probably delivers the nickel.

The protein localises to the cytoplasm. Facilitates the functional incorporation of the urease nickel metallocenter. This process requires GTP hydrolysis, probably effectuated by UreG. In Mycolicibacterium gilvum (strain PYR-GCK) (Mycobacterium gilvum (strain PYR-GCK)), this protein is Urease accessory protein UreG.